The chain runs to 273 residues: ATLKDITRRLKSIKNIQKITKSMKMVAAAKYARAERELKPARVYGTGSLALYEKAEIKGPEDKKKHLIIGVSSDRGLCGAIHSSVAKQMKNDMAALTAAGKEVMIVGIGEKIKSILYRTHSDQFLVSFKDVGRKPPTFGDASVIALELLNSGYEFDEGSIIFNQFKSVISYKTEEKPIFSFSTVVAAENMSIYDDIDADVLQNYQEYNLANIIYYSLKESTTSEQSARMTAMDNASKNASDMIDKLTLTFNRTRQAVITKELIEIISGAAALD.

Lysine 14 carries the N6-acetyllysine modification. Lysine 24 bears the N6-succinyllysine mark. Lysine 30 is subject to N6-acetyllysine. Lysine 90 bears the N6-acetyllysine; alternate mark. Lysine 90 carries the N6-succinyllysine; alternate modification. The residue at position 113 (lysine 113) is an N6-acetyllysine. Serine 121 carries the post-translational modification Phosphoserine. Position 129 is an N6-acetyllysine; alternate (lysine 129). Residue lysine 129 is modified to N6-succinyllysine; alternate. Lysine 172 bears the N6-acetyllysine mark. At lysine 245 the chain carries N6-succinyllysine.

Belongs to the ATPase gamma chain family. Component of the ATP synthase complex composed at least of ATP5F1A/subunit alpha, ATP5F1B/subunit beta, ATP5MC1/subunit c (homooctomer), MT-ATP6/subunit a, MT-ATP8/subunit 8, ATP5ME/subunit e, ATP5MF/subunit f, ATP5MG/subunit g, ATP5MK/subunit k, ATP5MJ/subunit j, ATP5F1C/subunit gamma, ATP5F1D/subunit delta, ATP5F1E/subunit epsilon, ATP5PF/subunit F6, ATP5PB/subunit b, ATP5PD/subunit d, ATP5PO/subunit OSCP. ATP synthase complex consists of a soluble F(1) head domain (subunits alpha(3) and beta(3)) - the catalytic core - and a membrane F(0) domain - the membrane proton channel (subunits c, a, 8, e, f, g, k and j). These two domains are linked by a central stalk (subunits gamma, delta, and epsilon) rotating inside the F1 region and a stationary peripheral stalk (subunits F6, b, d, and OSCP). Interacts with FLVCR2; this interaction occurs in the absence of heme and is disrupted upon heme binding.

The protein resides in the mitochondrion inner membrane. Its function is as follows. Subunit gamma, of the mitochondrial membrane ATP synthase complex (F(1)F(0) ATP synthase or Complex V) that produces ATP from ADP in the presence of a proton gradient across the membrane which is generated by electron transport complexes of the respiratory chain. ATP synthase complex consist of a soluble F(1) head domain - the catalytic core - and a membrane F(1) domain - the membrane proton channel. These two domains are linked by a central stalk rotating inside the F(1) region and a stationary peripheral stalk. During catalysis, ATP synthesis in the catalytic domain of F(1) is coupled via a rotary mechanism of the central stalk subunits to proton translocation. In vivo, can only synthesize ATP although its ATP hydrolase activity can be activated artificially in vitro. With the central stalk subunit delta, is essential for the biogenesis of F(1) catalytic part of the ATP synthase complex namely in the formation of F1 assembly intermediate. The chain is ATP synthase F(1) complex subunit gamma, mitochondrial from Rattus norvegicus (Rat).